Here is a 285-residue protein sequence, read N- to C-terminus: RING finger protein 223 (285 aa).

The RING-type zinc-finger motif lies at 81–132 (CSICFSGYDNIFKTPKELSCSHVFCLECLARLAAAQPAGRSGREAVPCPFCR). A helical transmembrane segment spans residues 230 to 250 (VALVSVLLLVLFCVILWPVQC).

Its subcellular location is the membrane. In Mus musculus (Mouse), this protein is RING finger protein 223 (Rnf223).